A 200-amino-acid polypeptide reads, in one-letter code: UPF0301 protein BR0480/BS1330_I0481 (200 aa).

The protein belongs to the UPF0301 (AlgH) family.

The polypeptide is UPF0301 protein BR0480/BS1330_I0481 (Brucella suis biovar 1 (strain 1330)).